The chain runs to 442 residues: Probable xylan O-acetyltransferase 8 (442 aa).

At 1–13 (MVQLPAMKRVKGR) the chain is on the cytoplasmic side. The chain crosses the membrane as a helical; Signal-anchor for type II membrane protein span at residues 14–34 (APLSVVVAIIGGLALAGIIFT). Residues 35–442 (EDLRGLTEVK…TWNRLLYAHL (408 aa)) lie on the Lumenal side of the membrane. Asn96 is a glycosylation site (N-linked (GlcNAc...) asparagine). Cystine bridges form between Cys100/Cys151, Cys122/Cys187, Cys131/Cys426, and Cys344/Cys422. The GDS motif motif lies at 174 to 176 (GDS). Ser176 functions as the Nucleophile in the catalytic mechanism. 3 N-linked (GlcNAc...) asparagine glycosylation sites follow: Asn217, Asn346, and Asn384. The Proton donor role is filled by Asp421. Residues 421–424 (DCIH) carry the DXXH motif motif. His424 (proton acceptor) is an active-site residue.

This sequence belongs to the PC-esterase family. TBL subfamily.

Its subcellular location is the golgi apparatus membrane. Functionally, probable xylan acetyltransferase required for 2-O- and 3-O-monoacetylation of xylosyl residues in xylan. Possesses extremely low activity in vitro. The sequence is that of Probable xylan O-acetyltransferase 8 from Oryza sativa subsp. japonica (Rice).